Reading from the N-terminus, the 369-residue chain is MIPLLMGAGISLALVMIGTQLFIRLLIRKGYGQFIRDDGPTSHHTKRGTPTMGGAVVIGTVILAYLLTHLISWWINPKAPGPSVSGWLLLLLMAGMGLVGFLDDFIKISKQRSLGLNAKAKLILQAAIGILFAVLAINFADHNGRTPATTKISFARDIPGLDLAFAGAGLGVLLFVIWANLIITAATNGVNLTDGLDGLAAGASVMVFGAYTLIGIWQSNQSCGSPRAVSSTVCYEVRDPLDLALLAAIIFGALIGFLWWNTSPAKIFMGDTGSLAIGGAIAGFAILSRTEILLAIIGGLFVLITLSVILQVGFFKLTGGKRLFKMAPLQHHFELKGWAEVTIVVRFWILGGLLVAIGLGAFYAEWVVF.

The next 10 helical transmembrane spans lie at 2–22 (IPLLMGAGISLALVMIGTQLF), 55–75 (AVVIGTVILAYLLTHLISWWI), 82–102 (PSVSGWLLLLLMAGMGLVGFL), 120–140 (AKLILQAAIGILFAVLAINFA), 163–183 (LAFAGAGLGVLLFVIWANLII), 196–216 (LDGLAAGASVMVFGAYTLIGI), 240–260 (PLDLALLAAIIFGALIGFLWW), 267–287 (IFMGDTGSLAIGGAIAGFAIL), 292–312 (ILLAIIGGLFVLITLSVILQV), and 349–369 (ILGGLLVAIGLGAFYAEWVVF).

It belongs to the glycosyltransferase 4 family. MraY subfamily. The cofactor is Mg(2+).

Its subcellular location is the cell membrane. It carries out the reaction UDP-N-acetyl-alpha-D-muramoyl-L-alanyl-gamma-D-glutamyl-meso-2,6-diaminopimeloyl-D-alanyl-D-alanine + di-trans,octa-cis-undecaprenyl phosphate = di-trans,octa-cis-undecaprenyl diphospho-N-acetyl-alpha-D-muramoyl-L-alanyl-D-glutamyl-meso-2,6-diaminopimeloyl-D-alanyl-D-alanine + UMP. It functions in the pathway cell wall biogenesis; peptidoglycan biosynthesis. Catalyzes the initial step of the lipid cycle reactions in the biosynthesis of the cell wall peptidoglycan: transfers peptidoglycan precursor phospho-MurNAc-pentapeptide from UDP-MurNAc-pentapeptide onto the lipid carrier undecaprenyl phosphate, yielding undecaprenyl-pyrophosphoryl-MurNAc-pentapeptide, known as lipid I. The polypeptide is Phospho-N-acetylmuramoyl-pentapeptide-transferase (Renibacterium salmoninarum (strain ATCC 33209 / DSM 20767 / JCM 11484 / NBRC 15589 / NCIMB 2235)).